A 445-amino-acid polypeptide reads, in one-letter code: Phosphoglucosamine mutase (445 aa).

Catalysis depends on Ser102, which acts as the Phosphoserine intermediate. Mg(2+) is bound by residues Ser102, Asp241, Asp243, and Asp245. Ser102 carries the phosphoserine modification.

The protein belongs to the phosphohexose mutase family. Mg(2+) is required as a cofactor. Post-translationally, activated by phosphorylation.

The enzyme catalyses alpha-D-glucosamine 1-phosphate = D-glucosamine 6-phosphate. Catalyzes the conversion of glucosamine-6-phosphate to glucosamine-1-phosphate. This is Phosphoglucosamine mutase from Pectobacterium atrosepticum (strain SCRI 1043 / ATCC BAA-672) (Erwinia carotovora subsp. atroseptica).